A 375-amino-acid chain; its full sequence is Trans-enoyl reductase iccB (375 aa).

Position 48–51 (48–51 (VDAK)) interacts with NADP(+). 143 to 150 (AAVATVGL) lines the substrate pocket. Residues 204 to 207 (SSAS), Y222, and 269 to 270 (LD) contribute to the NADP(+) site. 289–293 (TYSQF) contacts substrate. 358–359 (IK) lines the NADP(+) pocket.

The protein belongs to the zinc-containing alcohol dehydrogenase family. As to quaternary structure, monomer.

It carries out the reaction N-[(4E,6E,10S,12Z,14E)-6,10-dimethyl-3-oxohexadeca-4,6,12,14-tetraenoyl]-L-tyrosyl-[ACP] = (3E,5S)-3-[(2E,4E,8S,10E,12Z)-1-hydroxy-4,8-dimethyltetradeca-2,4,10,12-tetraen-1-ylidene]-5-[(4-hydroxyphenyl)methyl]pyrrolidine-2,4-dione + holo-[ACP] + H(+). The protein operates within mycotoxin biosynthesis. Its function is as follows. Trans-enoyl reductase; part of the gene cluster that mediates the biosynthesis of ilicicolin H, a 4-hydroxy-2-pyridonealkaloid that has potent and broad antifungal activities by inhibiting the mitochondrial respiration chain. IccB collaborates with the hybrid PKS-NRPS synthetase iccA to assemble the backbone of ilicicolin H. The PKS portion of iccA and trans-acting enoyl reductase iccB work together to construct an octaketide, and two methyl groups are introduced by the MT domain of iccA during the chain assembly. The nascent chain is then condensed with tyrosine, catalyzed by the iliA C domain, and the resulting PKS-NRPS hybrid is offloaded by the iliA RED domain to form an advanced tetramic acid intermediate. The biosynthesis of ilicicolin H starts with formation of the tetramic acid by the hybrid PKS-NRPS synthetase iccA with the partnering trans-enoyl reductase iccB since iccA lacks a designated enoylreductase (ER) domain. The cytochrome P450 monooxygenase iccC then catalyzes the ring expansion of the tetramate to the acyclic 2-pyridone. The pericyclase iccD further converts the acyclic 2-pyridone into 8-epi-ilicicolin H. Finally, the epimerase iccE converts 8-epi-ilicicolin H into ilicicolin H via epimerization. IccA to iccE are sufficient for ilicicolin H biosynthesis and the roles of the remaining enzymes, iccF, iccG and iccH within the pathway have still to be determined. The chain is Trans-enoyl reductase iccB from Talaromyces variabilis (Penicillium variabile).